The sequence spans 665 residues: Transketolase 1 (665 aa).

H26 contributes to the substrate binding site. Thiamine diphosphate-binding positions include H66 and 114 to 116; that span reads GPL. D155 provides a ligand contact to Mg(2+). The thiamine diphosphate site is built by G156 and N185. N185 and I187 together coordinate Mg(2+). Positions 261, 358, and 385 each coordinate substrate. H261 is a binding site for thiamine diphosphate. The Proton donor role is filled by E412. F438 contacts thiamine diphosphate. Residues H462, D470, and R521 each contribute to the substrate site.

Belongs to the transketolase family. Homodimer. Mg(2+) is required as a cofactor. Ca(2+) serves as cofactor. It depends on Mn(2+) as a cofactor. The cofactor is Co(2+). Requires thiamine diphosphate as cofactor.

It carries out the reaction D-sedoheptulose 7-phosphate + D-glyceraldehyde 3-phosphate = aldehydo-D-ribose 5-phosphate + D-xylulose 5-phosphate. Its function is as follows. Catalyzes the transfer of a two-carbon ketol group from a ketose donor to an aldose acceptor, via a covalent intermediate with the cofactor thiamine pyrophosphate. This chain is Transketolase 1 (tkt1), found in Vibrio cholerae serotype O1 (strain ATCC 39315 / El Tor Inaba N16961).